Reading from the N-terminus, the 217-residue chain is Chorionic somatomammotropin hormone 2 (217 aa).

The N-terminal stretch at 1–26 (MAAGSRTSLLLAFALLCLPWLQEAGA) is a signal peptide. His-44 contributes to the Zn(2+) binding site. Cys-79 and Cys-191 are oxidised to a cystine. Zn(2+) is bound at residue Glu-200. Cysteines 208 and 215 form a disulfide.

The protein belongs to the somatotropin/prolactin family. In terms of assembly, can be found in a monomeric as well as dimeric form.

Its subcellular location is the secreted. Produced only during pregnancy and is involved in stimulating lactation, fetal growth and metabolism. Does not interact with GHR but only activates PRLR through zinc-induced dimerization. This Homo sapiens (Human) protein is Chorionic somatomammotropin hormone 2 (CSH2).